A 219-amino-acid chain; its full sequence is Trafficking protein particle complex subunit 4 (219 aa).

It belongs to the TRAPP small subunits family. TRAPPC4 subfamily. In terms of assembly, component of the multisubunit TRAPP (transport protein particle) complex, which includes at least TRAPPC2, TRAPPC2L, TRAPPC3, TRAPPC3L, TRAPPC4, TRAPPC5, TRAPPC8, TRAPPC9, TRAPPC10, TRAPPC11 and TRAPPC12. Interacts with SDC2.

The protein localises to the postsynaptic cell membrane. It localises to the golgi apparatus membrane. It is found in the endoplasmic reticulum. The protein resides in the vesicle. Its function is as follows. Core component of the TRAPP complexes which has a function of guanine nucleotide exchange factor activity for Rab1 GTPase. Plays a role in vesicular transport from endoplasmic reticulum to Golgi and autophagy. May play a role in dendrite postsynaptic membrane trafficking. This Homo sapiens (Human) protein is Trafficking protein particle complex subunit 4.